The primary structure comprises 189 residues: Probable nicotinate-nucleotide adenylyltransferase (189 aa).

Belongs to the NadD family.

It carries out the reaction nicotinate beta-D-ribonucleotide + ATP + H(+) = deamido-NAD(+) + diphosphate. It participates in cofactor biosynthesis; NAD(+) biosynthesis; deamido-NAD(+) from nicotinate D-ribonucleotide: step 1/1. Its function is as follows. Catalyzes the reversible adenylation of nicotinate mononucleotide (NaMN) to nicotinic acid adenine dinucleotide (NaAD). The chain is Probable nicotinate-nucleotide adenylyltransferase from Bacillus cereus (strain AH187).